The chain runs to 120 residues: Large ribosomal subunit protein uL18 (120 aa).

A disordered region spans residues 1–29 (MITKPNKNAGRKKRHAHVRRTLSGTPQRP). The span at 9-20 (AGRKKRHAHVRR) shows a compositional bias: basic residues.

It belongs to the universal ribosomal protein uL18 family. In terms of assembly, part of the 50S ribosomal subunit; part of the 5S rRNA/L5/L18/L25 subcomplex. Contacts the 5S and 23S rRNAs.

Functionally, this is one of the proteins that bind and probably mediate the attachment of the 5S RNA into the large ribosomal subunit, where it forms part of the central protuberance. The protein is Large ribosomal subunit protein uL18 of Shouchella clausii (strain KSM-K16) (Alkalihalobacillus clausii).